The primary structure comprises 164 residues: Transcription elongation factor GreA (164 aa).

Positions 15–76 (DRLKNELDQL…LQELLNSAKV (62 aa)) form a coiled coil.

The protein belongs to the GreA/GreB family.

Necessary for efficient RNA polymerase transcription elongation past template-encoded arresting sites. The arresting sites in DNA have the property of trapping a certain fraction of elongating RNA polymerases that pass through, resulting in locked ternary complexes. Cleavage of the nascent transcript by cleavage factors such as GreA or GreB allows the resumption of elongation from the new 3'terminus. GreA releases sequences of 2 to 3 nucleotides. This chain is Transcription elongation factor GreA, found in Rhodococcus erythropolis (strain PR4 / NBRC 100887).